The sequence spans 94 residues: Small ribosomal subunit protein uS17 (94 aa).

It belongs to the universal ribosomal protein uS17 family. Part of the 30S ribosomal subunit.

Its function is as follows. One of the primary rRNA binding proteins, it binds specifically to the 5'-end of 16S ribosomal RNA. This is Small ribosomal subunit protein uS17 from Streptomyces avermitilis (strain ATCC 31267 / DSM 46492 / JCM 5070 / NBRC 14893 / NCIMB 12804 / NRRL 8165 / MA-4680).